A 359-amino-acid polypeptide reads, in one-letter code: Epoxide hydrolase 4 (359 aa).

A helical; Signal-anchor for type II membrane protein membrane pass occupies residues 15–35 (ALLYWSLVYGYCGLCASVHLL). Residues 92-337 (PLMLLLHGFP…ILSEGSHWLQ (246 aa)) enclose the AB hydrolase-1 domain. Residue aspartate 167 is the Nucleophile of the active site. Residue tyrosine 279 is the Proton donor of the active site. The Proton acceptor role is filled by histidine 334.

Belongs to the AB hydrolase superfamily. Epoxide hydrolase family.

It is found in the membrane. The sequence is that of Epoxide hydrolase 4 (Ephx4) from Mus musculus (Mouse).